Reading from the N-terminus, the 200-residue chain is Recombination protein RecR (200 aa).

The segment at 58 to 73 adopts a C4-type zinc-finger fold; sequence CQKCHNISDTTLCSIC. A Toprim domain is found at 81–176; the sequence is GLICVVENIQ…KLSNIARGVA (96 aa).

It belongs to the RecR family.

May play a role in DNA repair. It seems to be involved in an RecBC-independent recombinational process of DNA repair. It may act with RecF and RecO. This chain is Recombination protein RecR, found in Amoebophilus asiaticus (strain 5a2).